The following is a 508-amino-acid chain: MSSIDRSQPVGVKTYEVRTYGCQMNVHDSERLSGLLEDAGYVRAPDGSDGDADVVVFNTCAVRENADNRLYGNLGRLAPMKTKRPGMQIAVGGCLAQKDRDTIVTKAPWVDVVFGTHNIGKLPVLLERARVQEEAQVEIAESLEAFPSTLPTRRESAYAAWVSISVGCNNTCTFCIVPALRGKEKDRRTGDILAEIEALVGEGVSEITLLGQNVNAYGSDIGDREAFSKLLRACGQIDGLERVRFTSPHPRDFTDDVIAAMAETPNVMPQLHMPMQSGSDTVLKAMRRSYRQDRYLGIIEKVRAAIPHAAITTDIIVGFPGETEEDFEQTMHAVREARFTQAFTFQYSKRPGTPAATMENQIPKEVVQARYERLVALQEEISWDENKKQVGRTLELMVAEGEGRKDGATHRLSGRAPDNRLVHFTKPDEEVRPGDVVTVEVTYAAPHHLLAEGPVLNVRRTRAGDAWEKRHIEKTAEAAKPAGVMLGLPKIGAPEPLPVATGSGCGCD.

The MTTase N-terminal domain occupies 13–131 (KTYEVRTYGC…LPVLLERARV (119 aa)). Cysteine 22, cysteine 60, cysteine 94, cysteine 168, cysteine 172, and cysteine 175 together coordinate [4Fe-4S] cluster. One can recognise a Radical SAM core domain in the interval 154–385 (RESAYAAWVS…ALQEEISWDE (232 aa)). Positions 387–455 (KKQVGRTLEL…PHHLLAEGPV (69 aa)) constitute a TRAM domain.

Belongs to the methylthiotransferase family. MiaB subfamily. As to quaternary structure, monomer. It depends on [4Fe-4S] cluster as a cofactor.

It is found in the cytoplasm. It catalyses the reaction N(6)-dimethylallyladenosine(37) in tRNA + (sulfur carrier)-SH + AH2 + 2 S-adenosyl-L-methionine = 2-methylsulfanyl-N(6)-dimethylallyladenosine(37) in tRNA + (sulfur carrier)-H + 5'-deoxyadenosine + L-methionine + A + S-adenosyl-L-homocysteine + 2 H(+). Functionally, catalyzes the methylthiolation of N6-(dimethylallyl)adenosine (i(6)A), leading to the formation of 2-methylthio-N6-(dimethylallyl)adenosine (ms(2)i(6)A) at position 37 in tRNAs that read codons beginning with uridine. In Streptomyces avermitilis (strain ATCC 31267 / DSM 46492 / JCM 5070 / NBRC 14893 / NCIMB 12804 / NRRL 8165 / MA-4680), this protein is tRNA-2-methylthio-N(6)-dimethylallyladenosine synthase.